Reading from the N-terminus, the 1521-residue chain is Protein dispatched homolog 1 (1521 aa).

The span at 1-10 (MAVISGSDSV) shows a compositional bias: polar residues. The disordered stretch occupies residues 1 to 55 (MAVISGSDSVLLSNGSISTSTSNPSPLSPSDGDLPAQHLGPRETPRTKASPNGCL). Low complexity predominate over residues 11 to 35 (LLSNGSISTSTSNPSPLSPSDGDLP). Asn14 and Asn58 each carry an N-linked (GlcNAc...) asparagine glycan. A helical membrane pass occupies residues 189–209 (VVVLGMCTLLIVVCALVGVLV). Asn390 carries an N-linked (GlcNAc...) asparagine glycan. An SSD domain is found at 485–657 (GIEFGIKHSL…VTWLPAVIVL (173 aa)). A run of 3 helical transmembrane segments spans residues 499-519 (LLMD…IMCV), 524-544 (MFIT…SYFL), and 548-568 (VFNF…LVGI). N-linked (GlcNAc...) asparagine glycosylation occurs at Asn581. The next 8 membrane-spanning stretches (helical) occupy residues 603–623 (AALS…ANYV), 637–657 (GTAI…VIVL), 717–737 (YLWL…VCVN), 986–1006 (MGLS…NIII), 1008–1028 (LYAI…LVLL), 1038–1058 (VTIS…GVAY), 1081–1101 (IAMA…STVL), and 1109–1129 (FMML…QCLC). Composition is skewed to polar residues over residues 1355 to 1364 (QENLGRTSTH) and 1418 to 1428 (TKSKVSGLPNQ). The segment at 1355-1440 (QENLGRTSTH…KEEKQVEPSL (86 aa)) is disordered. The N-linked (GlcNAc...) asparagine glycan is linked to Asn1455.

The protein belongs to the dispatched family. As to quaternary structure, interacts with SHH; via the cholesterol anchor of the dually lipid-modified SHH (ShhNp).

The protein resides in the membrane. Functions in hedgehog (Hh) signaling. Regulates the release and extracellular accumulation of cholesterol-modified hedgehog proteins and is hence required for effective production of the Hh signal. Synergizes with SCUBE2 to cause an increase in SHH secretion. This chain is Protein dispatched homolog 1 (Disp1), found in Mus musculus (Mouse).